A 442-amino-acid chain; its full sequence is Histidinol dehydrogenase (442 aa).

NAD(+) is bound by residues Tyr136, Gln197, and Asn220. Residues Ser243, Gln265, and His268 each coordinate substrate. Residues Gln265 and His268 each coordinate Zn(2+). Active-site proton acceptor residues include Glu333 and His334. Positions 334, 367, 421, and 426 each coordinate substrate. Residue Asp367 participates in Zn(2+) binding. Residue His426 coordinates Zn(2+).

The protein belongs to the histidinol dehydrogenase family. Requires Zn(2+) as cofactor.

The enzyme catalyses L-histidinol + 2 NAD(+) + H2O = L-histidine + 2 NADH + 3 H(+). It participates in amino-acid biosynthesis; L-histidine biosynthesis; L-histidine from 5-phospho-alpha-D-ribose 1-diphosphate: step 9/9. Functionally, catalyzes the sequential NAD-dependent oxidations of L-histidinol to L-histidinaldehyde and then to L-histidine. In Pseudomonas fluorescens (strain ATCC BAA-477 / NRRL B-23932 / Pf-5), this protein is Histidinol dehydrogenase.